We begin with the raw amino-acid sequence, 168 residues long: Crossover junction endodeoxyribonuclease RuvC (168 aa).

Active-site residues include D7, E66, and D138. Mg(2+)-binding residues include D7, E66, and D138.

This sequence belongs to the RuvC family. As to quaternary structure, homodimer which binds Holliday junction (HJ) DNA. The HJ becomes 2-fold symmetrical on binding to RuvC with unstacked arms; it has a different conformation from HJ DNA in complex with RuvA. In the full resolvosome a probable DNA-RuvA(4)-RuvB(12)-RuvC(2) complex forms which resolves the HJ. The cofactor is Mg(2+).

It localises to the cytoplasm. The enzyme catalyses Endonucleolytic cleavage at a junction such as a reciprocal single-stranded crossover between two homologous DNA duplexes (Holliday junction).. Functionally, the RuvA-RuvB-RuvC complex processes Holliday junction (HJ) DNA during genetic recombination and DNA repair. Endonuclease that resolves HJ intermediates. Cleaves cruciform DNA by making single-stranded nicks across the HJ at symmetrical positions within the homologous arms, yielding a 5'-phosphate and a 3'-hydroxyl group; requires a central core of homology in the junction. The consensus cleavage sequence is 5'-(A/T)TT(C/G)-3'. Cleavage occurs on the 3'-side of the TT dinucleotide at the point of strand exchange. HJ branch migration catalyzed by RuvA-RuvB allows RuvC to scan DNA until it finds its consensus sequence, where it cleaves and resolves the cruciform DNA. The chain is Crossover junction endodeoxyribonuclease RuvC from Cereibacter sphaeroides (strain ATCC 17029 / ATH 2.4.9) (Rhodobacter sphaeroides).